A 613-amino-acid chain; its full sequence is Probable potassium transport system protein Kup (613 aa).

The next 11 helical transmembrane spans lie at 38-58 (VLGV…LKYL), 91-111 (WILV…GMIT), 128-148 (PSFG…LFLF), 159-179 (FFGP…LVEI), 206-226 (FLVL…YADM), 238-258 (WSLL…AVLL), 270-290 (ALVP…ATII), 328-348 (IYVP…VAGF), 357-377 (AYGV…YYVA), 387-407 (GLNL…GASV), and 410-430 (LFHG…LMLT).

The protein belongs to the HAK/KUP transporter (TC 2.A.72) family.

The protein localises to the cell inner membrane. It carries out the reaction K(+)(in) + H(+)(in) = K(+)(out) + H(+)(out). Transport of potassium into the cell. Likely operates as a K(+):H(+) symporter. The polypeptide is Probable potassium transport system protein Kup (Chlorobaculum tepidum (strain ATCC 49652 / DSM 12025 / NBRC 103806 / TLS) (Chlorobium tepidum)).